A 575-amino-acid chain; its full sequence is Septation ring formation regulator EzrA (575 aa).

Over 1-8 the chain is Extracellular; the sequence is MSNGQLIY. A helical transmembrane segment spans residues 9 to 27; the sequence is LMVAIAVILVLAYVVAIFL. Topologically, residues 28-575 are cytoplasmic; it reads RKRNEGRLEA…YEKTRETIRF (548 aa). Coiled-coil stretches lie at residues 105-191, 265-301, 354-416, and 456-526; these read LKAS…FVTL, LYEAFKKNQENIRQLELDNAEYENGQAQEEINALYDI, VRRI…IEKD, and TASN…IQEA.

Belongs to the EzrA family.

It localises to the cell membrane. Functionally, negative regulator of FtsZ ring formation; modulates the frequency and position of FtsZ ring formation. Inhibits FtsZ ring formation at polar sites. Interacts either with FtsZ or with one of its binding partners to promote depolymerization. The polypeptide is Septation ring formation regulator EzrA (Streptococcus pneumoniae serotype 4 (strain ATCC BAA-334 / TIGR4)).